The sequence spans 842 residues: Pentatricopeptide repeat-containing protein At3g23020 (842 aa).

The segment at 40–61 is disordered; that stretch reads YVPGTHESDKGPQRSTRNGDRG. Residues 45-59 are compositionally biased toward basic and acidic residues; the sequence is HESDKGPQRSTRNGD. PPR repeat units lie at residues 186–220, 221–255, 256–290, 297–331, 332–362, 366–400, 401–435, 436–470, 474–500, 504–538, 539–573, 574–608, 609–643, 644–674, 682–712, 716–750, 751–785, and 786–820; these read NVIH…GIKP, INST…GMQP, DEVT…ENKA, SSYT…GIVP, TTVT…MKLH, DTRT…GLKP, DPVS…NVEI, DEYT…GNMS, YSAN…CQEV, TVIE…GVTP, DKCT…GYVS, DCIP…NIEP, DVVV…GIPG, NSVI…LLQS, DVYT…MKQR, NEFT…KILT, DPLS…GIQP, and DDST…EIKR.

This sequence belongs to the PPR family. P subfamily.

The chain is Pentatricopeptide repeat-containing protein At3g23020 from Arabidopsis thaliana (Mouse-ear cress).